A 553-amino-acid chain; its full sequence is Urocanate hydratase (553 aa).

Residues 51-52 (GG), Gln129, 175-177 (GMG), Glu195, Arg200, 241-242 (NA), 262-266 (QTSAH), 272-273 (YL), and Tyr321 each bind NAD(+). Cys409 is a catalytic residue. Gly491 is a binding site for NAD(+).

This sequence belongs to the urocanase family. NAD(+) serves as cofactor.

It is found in the cytoplasm. It catalyses the reaction 4-imidazolone-5-propanoate = trans-urocanate + H2O. It participates in amino-acid degradation; L-histidine degradation into L-glutamate; N-formimidoyl-L-glutamate from L-histidine: step 2/3. Catalyzes the conversion of urocanate to 4-imidazolone-5-propionate. This Sphingopyxis alaskensis (strain DSM 13593 / LMG 18877 / RB2256) (Sphingomonas alaskensis) protein is Urocanate hydratase.